The sequence spans 378 residues: Probable endopolygalacturonase E (378 aa).

The N-terminal stretch at 1–19 is a signal peptide; the sequence is MVTSSSVIVLTLWAALVSA. A propeptide spanning residues 20–38 is cleaved from the precursor; that stretch reads SPVADPLVTPAPKLEDLEK. A disulfide bridge connects residues cysteine 43 and cysteine 61. PbH1 repeat units lie at residues 103–125, 174–204, and 205–226; these read GPLV…YLNG, STYL…DIGD, and STYI…AVNS. Residue aspartate 219 is the Proton donor of the active site. A disulfide bridge links cysteine 221 with cysteine 237. Histidine 241 is a catalytic residue. PbH1 repeat units follow at residues 256–277, 285–307, and 317–345; these read VKNV…RIKT, VSEV…VVEQ, and TDGI…YIVC. N-linked (GlcNAc...) asparagine glycosylation is present at asparagine 258. Intrachain disulfides connect cysteine 345/cysteine 350 and cysteine 369/cysteine 378.

This sequence belongs to the glycosyl hydrolase 28 family.

The protein resides in the secreted. It carries out the reaction (1,4-alpha-D-galacturonosyl)n+m + H2O = (1,4-alpha-D-galacturonosyl)n + (1,4-alpha-D-galacturonosyl)m.. Functionally, involved in maceration and soft-rotting of plant tissue. Hydrolyzes the 1,4-alpha glycosidic bonds of de-esterified pectate in the smooth region of the plant cell wall. The sequence is that of Probable endopolygalacturonase E (pgaE) from Aspergillus niger (strain ATCC MYA-4892 / CBS 513.88 / FGSC A1513).